We begin with the raw amino-acid sequence, 386 residues long: DNA dC-&gt;dU-editing enzyme APOBEC-3D (386 aa).

2 consecutive CMP/dCMP-type deaminase domains span residues 29–145 (GRSY…DWRW) and 187–334 (DDNY…LCSL). Residues His-78, Cys-109, Cys-112, and His-262 each coordinate Zn(2+). Glu-264 acts as the Proton donor in catalysis. Cys-293 and Cys-296 together coordinate Zn(2+).

The protein belongs to the cytidine and deoxycytidylate deaminase family. Can form homo- and heterodimers with APOBEC3F and APOBEC3G. Interacts with L1RE1; this interaction inhibits LINE-1 retrotransposition. As to quaternary structure, (Microbial infection) Interacts with HIV-1 Vif. This interaction triggers APOBEC3D polyubiquitylation and degradation by the 26S proteasome. It depends on Zn(2+) as a cofactor. In terms of tissue distribution, expressed in lymphoid organs. Also detected in non-lymphoid tissues including lung.

Its subcellular location is the cytoplasm. The protein localises to the P-body. The catalysed reaction is a 2'-deoxycytidine in single-stranded DNA + H2O + H(+) = a 2'-deoxyuridine in single-stranded DNA + NH4(+). Its activity is regulated as follows. (Microbial infection) Antiviral activity is neutralized by the HIV-1 virion infectivity factor (Vif), that prevents its incorporation into progeny virions by both inhibiting its translation and/or by inducing its ubiquitination and subsequent degradation by the 26S proteasome. Its function is as follows. DNA deaminase (cytidine deaminase) which acts as an inhibitor of retrovirus replication and retrotransposon mobility via deaminase-dependent and -independent mechanisms. Exhibits antiviral activity against HIV-1. After the penetration of retroviral nucleocapsids into target cells of infection and the initiation of reverse transcription, it can induce the conversion of cytosine to uracil in the minus-sense single-strand viral DNA, leading to G-to-A hypermutations in the subsequent plus-strand viral DNA. The resultant detrimental levels of mutations in the proviral genome, along with a deamination-independent mechanism that works prior to the proviral integration, together exert efficient antiretroviral effects in infected target cells. Selectively targets single-stranded DNA and does not deaminate double-stranded DNA or single- or double-stranded RNA. Also inhibits the mobility of LTR and non-LTR retrotransposons. Functionally, (Microbial infection) Enhances hepatitis B virus/HBV replication by excluding restriction factors APOBEC3F and APOBEC3G from HBV capsids. This is DNA dC-&gt;dU-editing enzyme APOBEC-3D from Homo sapiens (Human).